A 910-amino-acid polypeptide reads, in one-letter code: Protein translocase subunit SecA (910 aa).

ATP-binding positions include Gln-87, 105-109 (GEGKT), and Asp-512. Basic and acidic residues-rich tracts occupy residues 561–571 (RHESRRIDNQL), 841–853 (EEERRQQAEELAR), and 880–890 (TFEREARKVGR). Disordered regions lie at residues 561–584 (RHESRRIDNQLRGRSGRQGDAGSS) and 835–910 (EEVD…GKIN). Positions 894, 896, 905, and 906 each coordinate Zn(2+). Positions 900–910 (KKYKQCHGKIN) are enriched in basic residues.

The protein belongs to the SecA family. As to quaternary structure, monomer and homodimer. Part of the essential Sec protein translocation apparatus which comprises SecA, SecYEG and auxiliary proteins SecDF-YajC and YidC. Zn(2+) serves as cofactor.

The protein localises to the cell inner membrane. The protein resides in the cytoplasm. The enzyme catalyses ATP + H2O + cellular proteinSide 1 = ADP + phosphate + cellular proteinSide 2.. Functionally, part of the Sec protein translocase complex. Interacts with the SecYEG preprotein conducting channel. Has a central role in coupling the hydrolysis of ATP to the transfer of proteins into and across the cell membrane, serving both as a receptor for the preprotein-SecB complex and as an ATP-driven molecular motor driving the stepwise translocation of polypeptide chains across the membrane. This chain is Protein translocase subunit SecA, found in Photobacterium profundum (strain SS9).